The primary structure comprises 119 residues: Large ribosomal subunit protein uL22c (119 aa).

The protein belongs to the universal ribosomal protein uL22 family. In terms of assembly, part of the 50S ribosomal subunit.

The protein resides in the plastid. It is found in the chloroplast. Functionally, this protein binds specifically to 23S rRNA. The globular domain of the protein is located near the polypeptide exit tunnel on the outside of the subunit, while an extended beta-hairpin is found that lines the wall of the exit tunnel in the center of the 70S ribosome. This chain is Large ribosomal subunit protein uL22c (rpl22), found in Angiopteris evecta (Mule's foot fern).